A 44-amino-acid polypeptide reads, in one-letter code: U17-ctenitoxin-Co1a (44 aa).

Disulfide bonds link Cys3-Cys20, Cys10-Cys26, Cys19-Cys40, and Cys28-Cys38.

Expressed by the venom gland.

The protein resides in the secreted. Its function is as follows. Omega-agatoxins are antagonists of voltage-sensitive calcium channels (Cav). Toxic to mice by intracerebroventricular injection. The sequence is that of U17-ctenitoxin-Co1a from Ctenus ornatus (Brazilian spider).